A 238-amino-acid chain; its full sequence is MEESINPIISIGPVIFNLTMLAMTLLIVGVIFVFIYWASRNMTLKPKGKQNVLEYVYDFVIGFTEPNIGSRYMKDYSLFFLCLFLFMVIANNLGLMTKIQTIDGTNWWSSPTANLQYDLTLSFLVILLTHIESVRRRGFKKSIKSFMSPVFVIPMNILEEFTNFLSLALRIFGNIFAGEVMTSLLLLLSHQAIYWYPVAFGANLAWTAFSVFISCIQAYVFTLLTSVYLGNKINIEEE.

A run of 5 helical transmembrane segments spans residues Ile-15–Ile-35, Tyr-76–Met-96, Pro-111–Ile-131, Leu-167–Leu-187, and Ala-208–Gly-230.

This sequence belongs to the ATPase A chain family. F-type ATPases have 2 components, CF(1) - the catalytic core - and CF(0) - the membrane proton channel. CF(1) has five subunits: alpha(3), beta(3), gamma(1), delta(1), epsilon(1). CF(0) has three main subunits: a(1), b(2) and c(9-12). The alpha and beta chains form an alternating ring which encloses part of the gamma chain. CF(1) is attached to CF(0) by a central stalk formed by the gamma and epsilon chains, while a peripheral stalk is formed by the delta and b chains.

It is found in the cell membrane. In terms of biological role, key component of the proton channel; it plays a direct role in the translocation of protons across the membrane. This chain is ATP synthase subunit a, found in Streptococcus pneumoniae (strain 70585).